Reading from the N-terminus, the 240-residue chain is Mannosyl-D-glycerate transport/metabolism system repressor MngR (240 aa).

The HTH gntR-type domain maps to 4-72 (KPLYRQIADR…QGSGTYVKEE (69 aa)). Residues 32-51 (ESALQTEFGVSRVTVRQALR) constitute a DNA-binding region (H-T-H motif).

In terms of biological role, represses mngA and mngB. Regulates its own expression. The protein is Mannosyl-D-glycerate transport/metabolism system repressor MngR (mngR) of Escherichia coli (strain K12).